Reading from the N-terminus, the 353-residue chain is Protein MGF 360-9L (353 aa).

Belongs to the asfivirus MGF 360 family. Interacts with host STAT1; this interaction mediates STAT1 degradation through apoptosis. Interacts with host STAT2; this interaction mediates STAT2 degradation through the proteasome.

The protein resides in the host cytoplasm. Functionally, plays a role in virus cell tropism, and may be required for efficient virus replication in macrophages. In addition, inhibits IFN-beta-induced IFN-stimulated genes (ISGs) transcription. Mechanistically, degrades host STAT1 and STAT2 through apoptosis and ubiquitin-proteasome pathways respectively. The sequence is that of Protein MGF 360-9L from African swine fever virus (isolate Tick/Malawi/Lil 20-1/1983) (ASFV).